The primary structure comprises 276 residues: Formamidopyrimidine-DNA glycosylase (276 aa).

Pro-2 serves as the catalytic Schiff-base intermediate with DNA. Glu-3 functions as the Proton donor in the catalytic mechanism. Lys-58 (proton donor; for beta-elimination activity) is an active-site residue. Residues His-92, Arg-111, and Lys-154 each coordinate DNA. The segment at Gln-239 to Val-273 adopts an FPG-type zinc-finger fold. The active-site Proton donor; for delta-elimination activity is the Arg-263.

The protein belongs to the FPG family. Monomer. It depends on Zn(2+) as a cofactor.

It carries out the reaction Hydrolysis of DNA containing ring-opened 7-methylguanine residues, releasing 2,6-diamino-4-hydroxy-5-(N-methyl)formamidopyrimidine.. The enzyme catalyses 2'-deoxyribonucleotide-(2'-deoxyribose 5'-phosphate)-2'-deoxyribonucleotide-DNA = a 3'-end 2'-deoxyribonucleotide-(2,3-dehydro-2,3-deoxyribose 5'-phosphate)-DNA + a 5'-end 5'-phospho-2'-deoxyribonucleoside-DNA + H(+). Its function is as follows. Involved in base excision repair of DNA damaged by oxidation or by mutagenic agents. Acts as a DNA glycosylase that recognizes and removes damaged bases. Has a preference for oxidized purines, such as 7,8-dihydro-8-oxoguanine (8-oxoG). Has AP (apurinic/apyrimidinic) lyase activity and introduces nicks in the DNA strand. Cleaves the DNA backbone by beta-delta elimination to generate a single-strand break at the site of the removed base with both 3'- and 5'-phosphates. The chain is Formamidopyrimidine-DNA glycosylase from Lactobacillus acidophilus (strain ATCC 700396 / NCK56 / N2 / NCFM).